Here is a 307-residue protein sequence, read N- to C-terminus: Small ribosomal subunit biogenesis GTPase RsgA (307 aa).

The tract at residues 1 to 21 (MPSEHPFSDGIPTPNPKETMN) is disordered. A CP-type G domain is found at 85-242 (RQDAWKTKLI…LIDSPGLQEF (158 aa)). Residues 135-138 (NKAD) and 184-192 (GQSGMGKST) each bind GTP. Residues Cys266, Cys271, His273, and Cys279 each contribute to the Zn(2+) site.

The protein belongs to the TRAFAC class YlqF/YawG GTPase family. RsgA subfamily. Monomer. Associates with 30S ribosomal subunit, binds 16S rRNA. It depends on Zn(2+) as a cofactor.

The protein localises to the cytoplasm. Functionally, one of several proteins that assist in the late maturation steps of the functional core of the 30S ribosomal subunit. Helps release RbfA from mature subunits. May play a role in the assembly of ribosomal proteins into the subunit. Circularly permuted GTPase that catalyzes slow GTP hydrolysis, GTPase activity is stimulated by the 30S ribosomal subunit. This Neisseria meningitidis serogroup B (strain ATCC BAA-335 / MC58) protein is Small ribosomal subunit biogenesis GTPase RsgA.